A 254-amino-acid chain; its full sequence is Alcohol dehydrogenase (254 aa).

Position 1 is an N-acetylmethionine (M1). 10 to 33 (FVAALGGIGLDTSRELVKRNLKNF) provides a ligand contact to NAD(+). S138 contacts substrate. The active-site Proton acceptor is the Y151.

This sequence belongs to the short-chain dehydrogenases/reductases (SDR) family. In terms of assembly, homodimer.

The catalysed reaction is a primary alcohol + NAD(+) = an aldehyde + NADH + H(+). It carries out the reaction a secondary alcohol + NAD(+) = a ketone + NADH + H(+). The protein is Alcohol dehydrogenase (Adh) of Drosophila lebanonensis (Fruit fly).